Reading from the N-terminus, the 530-residue chain is Alpha-(1,3)-fucosyltransferase 4 (530 aa).

2 disordered regions span residues 1–48 (MRRL…RAVP) and 66–113 (HLGG…TPAD). The Cytoplasmic segment spans residues 1-147 (MRRLWGAARK…GGRRRWRRGR (147 aa)). Residues 88 to 106 (ASGERQRRLEPQLQHESRC) are compositionally biased toward basic and acidic residues. A helical; Signal-anchor for type II membrane protein transmembrane segment spans residues 148-172 (GLPWTVCVLAAAGLTCTALITYACW). The Lumenal segment spans residues 173–530 (GQLPPLPWAS…IRNLASWFER (358 aa)). Residues Asn-216 and Asn-315 are each glycosylated (N-linked (GlcNAc...) asparagine).

It belongs to the glycosyltransferase 10 family.

It localises to the golgi apparatus. Its subcellular location is the golgi stack membrane. The catalysed reaction is a beta-D-galactosyl-(1-&gt;4)-N-acetyl-beta-D-glucosaminyl derivative + GDP-beta-L-fucose = a beta-D-galactosyl-(1-&gt;4)-[alpha-L-fucosyl-(1-&gt;3)]-N-acetyl-beta-D-glucosaminyl derivative + GDP + H(+). The enzyme catalyses an N-acetyl-alpha-neuraminyl-(2-&gt;3)-beta-D-galactosyl-(1-&gt;4)-N-acetyl-beta-D-glucosaminyl derivative + GDP-beta-L-fucose = an alpha-Neu5Ac-(2-&gt;3)-beta-D-Gal-(1-&gt;4)-[alpha-L-Fuc-(1-&gt;3)]-beta-D-GlcNAc derivative + GDP + H(+). It catalyses the reaction an alpha-Neu5Ac-(2-&gt;3)-beta-D-Gal-(1-&gt;4)-beta-D-GlcNAc-(1-&gt;3)-beta-D-Gal-(1-&gt;4)-beta-D-GlcNAc derivative + GDP-beta-L-fucose = an alpha-Neu5Ac-(2-&gt;3)-beta-D-Gal-(1-&gt;4)-beta-D-GlcNAc-(1-&gt;3)-beta-D-Gal-(1-&gt;4)-[alpha-L-Fuc-(1-&gt;3)]-beta-D-GlcNAc derivative + GDP + H(+). It carries out the reaction an alpha-Neu5Ac-(2-&gt;3)-beta-D-Gal-(1-&gt;4)-beta-D-GlcNAc6S derivative + GDP-beta-L-fucose = an alpha-Neu5Ac-(2-&gt;3)-beta-D-Gal-(1-&gt;4)-[alpha-L-Fuc-(1-&gt;3)]-beta-D-GlcNAc6S derivative + GDP + H(+). It functions in the pathway protein modification; protein glycosylation. In terms of biological role, catalyzes alpha(1-&gt;3) linkage of fucosyl moiety transferred from GDP-beta-L-fucose to N-acetyl glucosamine (GlcNAc) within type 2 lactosamine (LacNAc, Gal-beta(1-&gt;4)GlcNAc) glycan attached to N- or O-linked glycoproteins. Robustly fucosylates nonsialylated distal LacNAc unit of the polylactosamine chain to form Lewis X antigen (CD15), a glycan determinant known to mediate important cellular functions in development and immunity. Fucosylates with lower efficiency sialylated LacNAc acceptors to form sialyl Lewis X and 6-sulfo sialyl Lewis X determinants that serve as recognition epitopes for C-type lectins. Together with FUT7 contributes to SELE, SELL and SELP selectin ligand biosynthesis and selectin-dependent lymphocyte homing, leukocyte migration and blood leukocyte homeostasis. In a cell type specific manner, may also fucosylate the internal LacNAc unit of the polylactosamine chain to form VIM-2 antigen that serves as recognition epitope for SELE. This chain is Alpha-(1,3)-fucosyltransferase 4 (FUT4), found in Pan troglodytes (Chimpanzee).